Here is a 498-residue protein sequence, read N- to C-terminus: ATP synthase subunit beta, chloroplastic (498 aa).

Gly172–Thr179 is a binding site for ATP.

It belongs to the ATPase alpha/beta chains family. In terms of assembly, F-type ATPases have 2 components, CF(1) - the catalytic core - and CF(0) - the membrane proton channel. CF(1) has five subunits: alpha(3), beta(3), gamma(1), delta(1), epsilon(1). CF(0) has four main subunits: a(1), b(1), b'(1) and c(9-12).

The protein localises to the plastid. It localises to the chloroplast thylakoid membrane. It catalyses the reaction ATP + H2O + 4 H(+)(in) = ADP + phosphate + 5 H(+)(out). Its function is as follows. Produces ATP from ADP in the presence of a proton gradient across the membrane. The catalytic sites are hosted primarily by the beta subunits. The protein is ATP synthase subunit beta, chloroplastic of Sorghum bicolor (Sorghum).